The sequence spans 563 residues: Cysteine--tRNA ligase, chloroplastic/mitochondrial (563 aa).

C91 is a Zn(2+) binding site. G92 serves as a coordination point for L-cysteine. The 'HIGH' region signature appears at 93-103 (VTAYDLSHIGH). T131 provides a ligand contact to L-cysteine. A 'KIIK' region motif is present at residues 136–139 (KIIA). C271, H296, and E300 together coordinate Zn(2+). Residue H296 participates in L-cysteine binding. The 'KMSKS' region signature appears at 328-332 (KMSKS). Position 331 (K331) interacts with ATP.

The protein belongs to the class-I aminoacyl-tRNA synthetase family. The cofactor is Zn(2+).

Its subcellular location is the plastid. The protein localises to the chloroplast. It localises to the mitochondrion. It carries out the reaction tRNA(Cys) + L-cysteine + ATP = L-cysteinyl-tRNA(Cys) + AMP + diphosphate. Required for female gametophyte development. Is necessary for the fusion of central cell nuclei and programmed cell death (PCD) of the antipodals. This is Cysteine--tRNA ligase, chloroplastic/mitochondrial from Arabidopsis thaliana (Mouse-ear cress).